The following is a 123-amino-acid chain: UPF0738 protein Bcer98_0913 (123 aa).

It belongs to the UPF0738 family.

The chain is UPF0738 protein Bcer98_0913 from Bacillus cytotoxicus (strain DSM 22905 / CIP 110041 / 391-98 / NVH 391-98).